The primary structure comprises 104 residues: Large ribosomal subunit protein bL21 (104 aa).

This sequence belongs to the bacterial ribosomal protein bL21 family. In terms of assembly, part of the 50S ribosomal subunit. Contacts protein L20.

In terms of biological role, this protein binds to 23S rRNA in the presence of protein L20. The sequence is that of Large ribosomal subunit protein bL21 from Clostridium tetani (strain Massachusetts / E88).